The following is a 650-amino-acid chain: Chaperone protein HtpG (650 aa).

An a; substrate-binding region spans residues 1–344 (MSKHTHSFQA…SADLPLNVSR (344 aa)). The tract at residues 345–582 (ELLQESRDVR…DGGMSTQLAR (238 aa)) is b. Positions 583–650 (LLKQAGQSAP…YVKRVNALLA (68 aa)) are c.

This sequence belongs to the heat shock protein 90 family. Homodimer.

It localises to the cytoplasm. Functionally, molecular chaperone. Has ATPase activity. In Acidovorax sp. (strain JS42), this protein is Chaperone protein HtpG.